The sequence spans 86 residues: Large ribosomal subunit protein bL27 (86 aa).

The protein belongs to the bacterial ribosomal protein bL27 family.

In Xanthomonas campestris pv. campestris (strain 8004), this protein is Large ribosomal subunit protein bL27.